A 662-amino-acid polypeptide reads, in one-letter code: MGRIVGIDLGTTNSVVAVLEAGRPHVIANAEGGRTTPSVVGYSKDQELLVGQLARRQLVLSPRNTFSNLKRFVGRDWEELEDSSLAVPYTVRANDRGQVRVPCPVTEREYAPEELVASIIRKLVDDASTYLGESVEAAVVTVPAYFNDAQRQATRDAGRLAGIAVERILNEPTAAALAYGFDRSAVRRVLVFDLGGGTFDVSLLRIANGVFDVKATNGDTQLGGNDFDQRIVDWIADAFQAEHGVDLRRDRQALQRLTEAAEKAKQELSGVLTTPISLPFIATGENGPLHVETNLDRSTFEGLCPDLLDRLLMPVQSALRDSGWAADDIDDVVLVGGATRMPMVQQLVRTLVPLDPCQSVNPDEVVAIGAAVQAGILTGELRDLLLNDVTPLSLGLETVGGLMRVLIPRNTPIPVRQSDVFSTSEPNQSSVEIHVWQGERQMASDNKSLGRFRLSGIPPAPRGVPQVQVAFDIDANGLLQVSATDRTTGRKQSVSIQGGSNLNEDEVTALLAEAEARADEDRRKRNQIERRNRAQTLVAQAERRLRDAALELGPYGAERQQRAVEMAMRDVQDCLAQDDLQELDLCLSGLEEALFGLNRRLSAERQSDGRPLQGLRNTLGSLKDELFADDWDDDPWAAPSGPPRGRSLNRRDRDPWDDDFYR.

Residue Thr198 is modified to Phosphothreonine; by autocatalysis. The disordered stretch occupies residues 630 to 662; it reads DWDDDPWAAPSGPPRGRSLNRRDRDPWDDDFYR. Residues 649–662 show a composition bias toward basic and acidic residues; it reads NRRDRDPWDDDFYR.

The protein belongs to the heat shock protein 70 family.

Acts as a chaperone. This Parasynechococcus marenigrum (strain WH8102) protein is Chaperone protein dnaK1 (dnaK1).